We begin with the raw amino-acid sequence, 168 residues long: Photosystem I assembly protein Ycf3 (168 aa).

3 TPR repeats span residues 35 to 68, 72 to 105, and 120 to 153; these read AFTY…EIDP, SYIL…NPFL, and GEQA…TPGN.

This sequence belongs to the Ycf3 family.

It localises to the plastid. The protein resides in the chloroplast thylakoid membrane. Its function is as follows. Essential for the assembly of the photosystem I (PSI) complex. May act as a chaperone-like factor to guide the assembly of the PSI subunits. The protein is Photosystem I assembly protein Ycf3 of Solanum bulbocastanum (Wild potato).